Reading from the N-terminus, the 203-residue chain is dCTP deaminase (203 aa).

DCTP-binding positions include 105–110, aspartate 123, 131–133, glutamine 152, tyrosine 166, lysine 173, and glutamine 177; these read RSSLGR and TLE. The active-site Proton donor/acceptor is glutamate 133. Residues 164-203 are disordered; the sequence is RPYGVERGSKYQDQDGPQASRIGSDPEFHSDENQAAEHES. The span at 166 to 176 shows a compositional bias: basic and acidic residues; it reads YGVERGSKYQD. Over residues 187–203 the composition is skewed to basic and acidic residues; the sequence is SDPEFHSDENQAAEHES.

It belongs to the dCTP deaminase family. As to quaternary structure, homotrimer.

It catalyses the reaction dCTP + H2O + H(+) = dUTP + NH4(+). It participates in pyrimidine metabolism; dUMP biosynthesis; dUMP from dCTP (dUTP route): step 1/2. In terms of biological role, catalyzes the deamination of dCTP to dUTP. This chain is dCTP deaminase, found in Halorubrum lacusprofundi (strain ATCC 49239 / DSM 5036 / JCM 8891 / ACAM 34).